Reading from the N-terminus, the 500-residue chain is Glycerol kinase (500 aa).

Thr-15 is a binding site for ADP. ATP is bound by residues Thr-15, Thr-16, and Ser-17. Sn-glycerol 3-phosphate is bound at residue Thr-15. Arg-19 is a binding site for ADP. Arg-85, Glu-86, Tyr-137, and Asp-245 together coordinate sn-glycerol 3-phosphate. Glycerol is bound by residues Arg-85, Glu-86, Tyr-137, Asp-245, and Gln-246. The ADP site is built by Thr-267 and Gly-310. The ATP site is built by Thr-267, Gly-310, Gln-314, and Gly-411. ADP contacts are provided by Gly-411 and Asn-415.

Belongs to the FGGY kinase family.

The catalysed reaction is glycerol + ATP = sn-glycerol 3-phosphate + ADP + H(+). It functions in the pathway polyol metabolism; glycerol degradation via glycerol kinase pathway; sn-glycerol 3-phosphate from glycerol: step 1/1. With respect to regulation, inhibited by fructose 1,6-bisphosphate (FBP). Functionally, key enzyme in the regulation of glycerol uptake and metabolism. Catalyzes the phosphorylation of glycerol to yield sn-glycerol 3-phosphate. This chain is Glycerol kinase, found in Aeromonas salmonicida (strain A449).